A 151-amino-acid chain; its full sequence is Small ribosomal subunit protein uS15 (151 aa).

The protein belongs to the universal ribosomal protein uS15 family.

This chain is Small ribosomal subunit protein uS15 (RpS13), found in Anopheles gambiae (African malaria mosquito).